Consider the following 1482-residue polypeptide: MIERGKFRSLTLVNWNGFFARTFDLDELVTTLSGGNGAGKSTTMAAFVTALIPDLTLLHFRNTTEAGATSGSRDKGLHGKLRAGVCYSTLDVINSRHQRVVVGVRLQQVAGRDRKVDIKPFMIQGLPTAMQPTQLLTENVGERQARVLPLNELKDRLDEMEGVQFKQFNSITDYHALMFDLGVIPKRLRSASDRSKFYRLIEASLYGGISSAITRSLRDYLLPENSGVRKAFQDMEAALRENRITLEAIRVTQSDRDLFKHLITEATAYVSADYMRHANERRTYLDQALALRGELFGSHRQLATERYRHVEMARELEEQSGASVDLEADHQAASDHLNLVQTAMRQQEKIDRYQGDLEELSYRLEEQTEVVEEAAELQAEYEARAEAAEQEVDELKSQLADYQQALDVQQTRAIQYQQALQALERARELCRLPDLAADNAEAWLETFQAKEQQATESLLTLEQKLSVADAAHSQFERAYQLVKNMVGEISRSEAWQSARELLRDWPSQQHLADRVQPLRMRLAELEQRLTNQQNAEFLLNEFCKRQGQQYQAEDLEGLQSELEARQEALSLSVNESGERRMEMRQALEQLKQKIQSLTARAPVWLAAQDTLSQLCEQNGEALASSNDVTEYMQQLLEREREATVERDEVAAQKRELEKQIERLSQPSGAEDSRMIALAERFGGVLLSEIYDDITIDDAPYFSALYGPARHGIVVPDLSLVRSHLETLEDCPEDLYLIEGDPQSFDDSVFNAEEQANAVLVKSSDRQWRYSRYPELPLFGRAARENRLEALNLERDTLAERYATLSFDVQKIQRAHQAFSQFVGKHLSVAFDTDPEAEIRELRQRHTELERELSRFEEQTQQQRQQYTQAKESLTTLNRLIPQVTLLLDETLIDRVEEIREELDEAQEAARFLQQHGSALAKLEPMVAVLQSDPQQHEQLQQDYETAKQSQHQAKQQAFALVEVVQRRAHFSYSDSAGMLSENADLNDKLRQRLEHAESDRSRAREQLRQQQAQYSQFNQVLASLKSSYETKQDMLKELHQEMKEIGVRADANAEMRARERRDQLHEALSANRSRVNQLEKQIAFCEAEMDSLQKKLRKLERDYYQIREQVVSAKAGWCAVMRMVKDNGVERRLHRRELAYMEGGALRSMSDKALGALRLAVSDNEHLRDALRLSEDPKRPERKIQFFIAVYQHLRERIRQDIIRTDDPVDAIEQMEIELARLTEELTAREQKLAISSKSVANIIRKTIQREQNRIRMLNQGLQAVSFGQVRGVRLNVNVRESHALLLDVLSEQQEQHQDLFNSQRLTFSEAMAKLYQRLNPQVDMGQRLPQTIGEELLDYRNYLELDVEVNRGSDGWLKAESGALSTGEAIGTGMSILVMVVQSWEEESRRLRGKDISPCRLLFLDEAARLDAKSIATLFELCERLQMQLIIAAPENISPEKGTTYKLVRKVFKNHEHVHVVGLRGFGQDVPATQLISDATA.

34–41 is an ATP binding site; it reads GGNGAGKS. The stretch at 333–665 forms a coiled coil; that stretch reads ASDHLNLVQT…LEKQIERLSQ (333 aa). Residues 666 to 783 form a flexible hinge region; the sequence is PSGAEDSRMI…ELPLFGRAAR (118 aa). Coiled-coil stretches lie at residues 784–1116 and 1209–1260; these read ENRL…AKAG and VDAI…MLNQ.

This sequence belongs to the SMC family. MukB subfamily. In terms of assembly, homodimerization via its hinge domain. Binds to DNA via its C-terminal region. Interacts, and probably forms a ternary complex, with MukE and MukF via its C-terminal region. The complex formation is stimulated by calcium or magnesium. Interacts with tubulin-related protein FtsZ.

It is found in the cytoplasm. The protein localises to the nucleoid. Functionally, plays a central role in chromosome condensation, segregation and cell cycle progression. Functions as a homodimer, which is essential for chromosome partition. Involved in negative DNA supercoiling in vivo, and by this means organize and compact chromosomes. May achieve or facilitate chromosome segregation by condensation DNA from both sides of a centrally located replisome during cell division. The chain is Chromosome partition protein MukB from Photorhabdus laumondii subsp. laumondii (strain DSM 15139 / CIP 105565 / TT01) (Photorhabdus luminescens subsp. laumondii).